We begin with the raw amino-acid sequence, 50 residues long: MLTKYALVAVIVLCLTVPGFTLLVGDSLCEFTVKERNIEFRAVLAYEPKK.

The chain crosses the membrane as a helical span at residues 5 to 25; the sequence is YALVAVIVLCLTVPGFTLLVG.

The protein belongs to the Hok/Gef family.

The protein localises to the cell inner membrane. In terms of biological role, toxic component of a type I toxin-antitoxin (TA) system. When overexpressed kills cells within minutes; causes collapse of the transmembrane potential and arrest of respiration. Its toxic effect is probably neutralized by an antisense antitoxin Sok RNA. This chain is Putative protein HokF (hokF), found in Escherichia coli O157:H7.